Reading from the N-terminus, the 454-residue chain is V-type ATP synthase subunit I 2 (454 aa).

The segment at 101–121 is disordered; that stretch reads EREGDAPSVPRGKSSVAHDSA. The next 4 helical transmembrane spans lie at 254–274, 293–313, 351–371, and 424–444; these read LLFG…VLGL, VFLS…EFFA, MAFF…GLII, and ACLS…SVCV.

Belongs to the V-ATPase 116 kDa subunit family.

It localises to the cell membrane. Produces ATP from ADP in the presence of a proton gradient across the membrane. The protein is V-type ATP synthase subunit I 2 (atpI2) of Treponema pallidum (strain Nichols).